Here is a 460-residue protein sequence, read N- to C-terminus: MLTIYNTLTKSKEVFKPLDGNKVRMYVCGMTVYDYCHLGHGRSMVAFDLVTRWLRFSGYDLTYVRNITDIDDKIINRANENGESFEALTERMIAAMHEDEARLNIKKPDMEPRATDHIPGMHAMIQTLIDKGYAYAPGNGDVYYRVGKFMGYGKLSRKKIEDLRIGARIEVDEAKEDPLDFVLWKGVKPGEPSWESPWGAGRPGWHIECSVMSTCCLGETFDIHGGGSDLEFPHHENEIAQSEAATGKTYANAWMHCGMIRINGEKMSKSLNNFFTIRDVLDKYHPEVVRYLLVSSHYRSAINYSEDNLKDAKGALERFYHALKGLPKVAPAGGEAFVERFTQVMNDDFGTPEACAVLFEMVREINRLRESDLDAAAGLAARLKELASVLGVLQLEADDFLQAGAEGRVDAAEVDALIQARLTARANKDWAESDRIRDQLTAMGVVLEDGKGGTTWRLAD.

Residue Cys-28 participates in Zn(2+) binding. The 'HIGH' region motif lies at 30–40 (MTVYDYCHLGH). The Zn(2+) site is built by Cys-209, His-234, and Glu-238. The 'KMSKS' region signature appears at 266-270 (KMSKS). Lys-269 is an ATP binding site.

It belongs to the class-I aminoacyl-tRNA synthetase family. Monomer. Zn(2+) serves as cofactor.

Its subcellular location is the cytoplasm. It catalyses the reaction tRNA(Cys) + L-cysteine + ATP = L-cysteinyl-tRNA(Cys) + AMP + diphosphate. The protein is Cysteine--tRNA ligase of Pseudomonas fluorescens (strain Pf0-1).